Reading from the N-terminus, the 346-residue chain is Ion-translocating oxidoreductase complex subunit D (346 aa).

A run of 4 helical transmembrane segments spans residues 20–40, 42–62, 69–91, and 120–140; these read IMIQVMLACLPGLMALTTFFG, GIIIQLVIACVTALVAEGVVL, LASRLGDGSALLTALLLALSLPP, and PFNPAMVGYVVLLISFPVQMT. Residue T187 is modified to FMN phosphoryl threonine. 5 helical membrane passes run 212–232, 242–262, 264–284, 290–310, and 314–334; these read ASAGWTWANIGFLLGGLYLIW, LSLLAAMLIGAGLGHWLAPVV, APPLLHLFSGATMLGAFFIAT, AATVRGRVIFGALTGLLVWLI, and GGYPDGVAFAVLLANICVPLI.

It belongs to the NqrB/RnfD family. As to quaternary structure, the complex is composed of six subunits: RnfA, RnfB, RnfC, RnfD, RnfE and RnfG. FMN is required as a cofactor.

The protein resides in the cell inner membrane. Its function is as follows. Part of a membrane-bound complex that couples electron transfer with translocation of ions across the membrane. In Sodalis glossinidius (strain morsitans), this protein is Ion-translocating oxidoreductase complex subunit D.